A 1215-amino-acid polypeptide reads, in one-letter code: DNA-directed RNA polymerase subunit beta' (1215 aa).

Cysteine 60, cysteine 62, cysteine 75, and cysteine 78 together coordinate Zn(2+). Mg(2+) is bound by residues aspartate 450, aspartate 452, and aspartate 454. Cysteine 819, cysteine 893, cysteine 900, and cysteine 903 together coordinate Zn(2+).

The protein belongs to the RNA polymerase beta' chain family. The RNAP catalytic core consists of 2 alpha, 1 beta, 1 beta' and 1 omega subunit. When a sigma factor is associated with the core the holoenzyme is formed, which can initiate transcription. Mg(2+) is required as a cofactor. Requires Zn(2+) as cofactor.

The catalysed reaction is RNA(n) + a ribonucleoside 5'-triphosphate = RNA(n+1) + diphosphate. Functionally, DNA-dependent RNA polymerase catalyzes the transcription of DNA into RNA using the four ribonucleoside triphosphates as substrates. The sequence is that of DNA-directed RNA polymerase subunit beta' from Levilactobacillus brevis (strain ATCC 367 / BCRC 12310 / CIP 105137 / JCM 1170 / LMG 11437 / NCIMB 947 / NCTC 947) (Lactobacillus brevis).